The sequence spans 1748 residues: WD repeat-containing protein 90 (1748 aa).

The segment at 1–207 (MARAWQHPFL…VTPMPREMAF (207 aa)) is binds with microtubules. Residue S241 is modified to Phosphoserine. A disordered region spans residues 274–308 (QTPSPTASGRAALAPRPFPEVSLSQERSDASNADG). WD repeat units lie at residues 407 to 450 (GHTD…CLFR), 452 to 494 (PMHV…LGGE), 501 to 541 (AHTD…LRSC), 615 to 654 (SSGP…VLLE), 656 to 695 (EHEG…YHML), 698 to 737 (SHTA…QLYD), 740 to 779 (SSED…VLVE), 782 to 821 (CHRG…WHVL), 882 to 922 (SRLD…IIRE), 926 to 964 (VHPE…SPGP), 969 to 1009 (GHSE…QSFP), 1156 to 1201 (GHSA…CQHL), 1204 to 1245 (PHST…LVSS), 1247 to 1286 (RLPE…ADIS), 1298 to 1326 (VGAG…VCVW), 1327 to 1376 (DTRA…ELRC), 1433 to 1472 (GHRS…LVIQ), 1475 to 1520 (VLNQ…MELK), 1523 to 1562 (PHPV…TFRV), 1568 to 1614 (GAPI…NHCE), and 1715 to 1748 (GHDN…VPGL). The tract at residues 1004-1071 (SDQSFPGAPP…GARDTRNSGA (68 aa)) is disordered.

This sequence belongs to the WD repeat WDR90/POC16 family.

The protein localises to the cytoplasm. It localises to the cytoskeleton. Its subcellular location is the microtubule organizing center. It is found in the centrosome. The protein resides in the centriole. The protein localises to the centriolar satellite. Microtubule-binding protein that plays a crucial role in ensuring inner core protein localization within the centriole core, as well as in maintaining the microtubule wall integrity and the overall centriole roundness and stability. Required for efficient primary cilium formation. This chain is WD repeat-containing protein 90 (WDR90), found in Homo sapiens (Human).